We begin with the raw amino-acid sequence, 358 residues long: Phosphate acyltransferase (358 aa).

Positions 336-358 (SAAGAAPASPETAPTPHPSTRAA) are disordered.

This sequence belongs to the PlsX family. Homodimer. Probably interacts with PlsY.

It localises to the cytoplasm. It catalyses the reaction a fatty acyl-[ACP] + phosphate = an acyl phosphate + holo-[ACP]. It functions in the pathway lipid metabolism; phospholipid metabolism. Functionally, catalyzes the reversible formation of acyl-phosphate (acyl-PO(4)) from acyl-[acyl-carrier-protein] (acyl-ACP). This enzyme utilizes acyl-ACP as fatty acyl donor, but not acyl-CoA. This is Phosphate acyltransferase from Cupriavidus pinatubonensis (strain JMP 134 / LMG 1197) (Cupriavidus necator (strain JMP 134)).